A 135-amino-acid polypeptide reads, in one-letter code: NADH-quinone oxidoreductase subunit K (135 aa).

Helical transmembrane passes span 33–53, 63–83, and 95–115; these read VLGL…FAIG, FLFM…AFVV, and IMFI…LAIL.

It belongs to the complex I subunit 4L family. NDH-1 is composed of 14 different subunits. Subunits NuoA, H, J, K, L, M, N constitute the membrane sector of the complex.

Its subcellular location is the cell inner membrane. It catalyses the reaction a quinone + NADH + 5 H(+)(in) = a quinol + NAD(+) + 4 H(+)(out). Its function is as follows. NDH-1 shuttles electrons from NADH, via FMN and iron-sulfur (Fe-S) centers, to quinones in the respiratory chain. The immediate electron acceptor for the enzyme in this species is believed to be ubiquinone. Couples the redox reaction to proton translocation (for every two electrons transferred, four hydrogen ions are translocated across the cytoplasmic membrane), and thus conserves the redox energy in a proton gradient. In Psychrobacter arcticus (strain DSM 17307 / VKM B-2377 / 273-4), this protein is NADH-quinone oxidoreductase subunit K.